The primary structure comprises 90 residues: MPRSIKKGPFVDPHLQKKVLEASASQSRRPIKTWSRRSMVVPEMIGLTIAVHNGRQHVPILVTENMVGHKLGEFSPTRTFKGHVANKKSR.

The protein belongs to the universal ribosomal protein uS19 family.

In terms of biological role, protein S19 forms a complex with S13 that binds strongly to the 16S ribosomal RNA. The sequence is that of Small ribosomal subunit protein uS19 from Nitrosococcus oceani (strain ATCC 19707 / BCRC 17464 / JCM 30415 / NCIMB 11848 / C-107).